The primary structure comprises 468 residues: MTDRPRLRLHDTAAGAVRDFVPLRDGHVSIYLCGATVQGLPHIGHVRSGVAFDILRRWLIALGYDVAFIRNVTDIDDKILNKAAAAGRPWWEWAATYERAFSAAYDALDVLPPSAEPRATGHITQMVELIERLIEKGHAYTGDGDVYFDVLSYPEYGQLSGHRIDDVHQGEGVASGKRDQRDFTLWKGAKPGEPSWPTPWGRGRPGWHTECVAMAHEYLGPEFDIHCGGMDLVFPHHENEIAQSRAAGDGFARYWLHNGWVTMGGEKMSKSLGNVLAIPAMLQRVRPAELRYYLGSAHYRSMLEFSDTALQDAVKAYVGVEEFLHRVRVRVGAVEPGEPTPRFADALNDDLAVPAALAEVHQARAEGNRALDSGDHEGALRQARSIRAMMGILGCDPLHERWETRDESSAALAAVDVLVRAELQNREKAREQRNWALADEIRNRLKQAGIEVTDTADGPQWTLGGDGK.

Cysteine 33 provides a ligand contact to Zn(2+). The 'HIGH' region motif lies at 35 to 45; it reads ATVQGLPHIGH. Residues cysteine 211, histidine 236, and glutamate 240 each contribute to the Zn(2+) site. Positions 267–271 match the 'KMSKS' region motif; sequence KMSKS. ATP is bound at residue lysine 270.

It belongs to the class-I aminoacyl-tRNA synthetase family. In terms of assembly, monomer. Requires Zn(2+) as cofactor.

It localises to the cytoplasm. It carries out the reaction tRNA(Cys) + L-cysteine + ATP = L-cysteinyl-tRNA(Cys) + AMP + diphosphate. The sequence is that of Cysteine--tRNA ligase from Mycobacterium avium (strain 104).